We begin with the raw amino-acid sequence, 500 residues long: Maturase K (500 aa).

This sequence belongs to the intron maturase 2 family. MatK subfamily.

It localises to the plastid. The protein resides in the chloroplast. Usually encoded in the trnK tRNA gene intron. Probably assists in splicing its own and other chloroplast group II introns. The chain is Maturase K from Adiantum capillus-veneris (Maidenhair fern).